We begin with the raw amino-acid sequence, 257 residues long: Phosphonates import ATP-binding protein PhnC (257 aa).

Positions 4-248 (IEFKNVSKVY…IFSEIYGRTI (245 aa)) constitute an ABC transporter domain. 37-44 (GLSGAGKS) contacts ATP.

The protein belongs to the ABC transporter superfamily. Phosphonates importer (TC 3.A.1.9.1) family. In terms of assembly, the complex is composed of two ATP-binding proteins (PhnC), two transmembrane proteins (PhnE) and a solute-binding protein (PhnD).

It is found in the cell membrane. It carries out the reaction phosphonate(out) + ATP + H2O = phosphonate(in) + ADP + phosphate + H(+). Part of the ABC transporter complex PhnCDE involved in phosphonates import. Responsible for energy coupling to the transport system. This chain is Phosphonates import ATP-binding protein PhnC, found in Staphylococcus aureus (strain bovine RF122 / ET3-1).